The primary structure comprises 513 residues: Butyrophilin subfamily 3 member A1 (513 aa).

Positions 1–29 (MKMASFLAFLLLNFRVCLLLLQLLMPHSA) are cleaved as a signal peptide. Ig-like V-type domains follow at residues 30–139 (QFSV…KALV) and 145–236 (ALGS…ASIS). The Extracellular portion of the chain corresponds to 30 to 254 (QFSVLGPSGP…AQRWIAALAG (225 aa)). Disulfide bonds link Cys52–Cys126 and Cys166–Cys220. Asn115 is a glycosylation site (N-linked (GlcNAc...) asparagine). Residues 255-271 (TLPVLLLLLGGAGYFLW) form a helical membrane-spanning segment. Over 272–513 (QQQEEKKTQF…EPTALTICPA (242 aa)) the chain is Cytoplasmic. Positions 322 to 513 (RGERHSAYNE…EPTALTICPA (192 aa)) constitute a B30.2/SPRY domain.

It belongs to the immunoglobulin superfamily. BTN/MOG family. In terms of assembly, homodimer. In terms of processing, N-glycosylated. In terms of tissue distribution, detected on T-cells, natural killer cells, dendritic cells and macrophages (at protein level). Ubiquitous. Highly expressed in heart, pancreas and lung, Moderately expressed in placenta, liver and muscle.

The protein localises to the cell membrane. Its function is as follows. Plays a role in T-cell activation and in the adaptive immune response. Regulates the proliferation of activated T-cells. Regulates the release of cytokines and IFNG by activated T-cells. Mediates the response of T-cells toward infected and transformed cells that are characterized by high levels of phosphorylated metabolites, such as isopentenyl pyrophosphate. This chain is Butyrophilin subfamily 3 member A1 (BTN3A1), found in Homo sapiens (Human).